Here is a 1017-residue protein sequence, read N- to C-terminus: Adhesion G-protein coupled receptor G2 (1017 aa).

Residues 1–37 form the signal peptide; that stretch reads MVFSVRQCGHVGRTEEVLLTFKIFLVIICLHVVLVTS. Over 38-627 the chain is Extracellular; it reads LEEDTDNSSL…TSVLPAQMMA (590 aa). Residues Asn-44, Asn-85, Asn-99, Asn-111, Asn-117, Asn-144, Asn-162, Asn-186, and Asn-194 are each glycosylated (N-linked (GlcNAc...) asparagine). The tract at residues 301–366 is disordered; that stretch reads PLSPQPSAPI…NTTSAPPVQT (66 aa). Residues 308-320 are compositionally biased toward low complexity; sequence APIASSPAIDMPP. Composition is skewed to polar residues over residues 321 to 335 and 344 to 366; these read QSET…THVS and SFSS…PVQT. N-linked (GlcNAc...) asparagine glycans are attached at residues Asn-357, Asn-370, Asn-435, Asn-438, Asn-456, Asn-461, Asn-528, Asn-542, Asn-547, Asn-551, and Asn-597. In terms of domain architecture, GAIN-B spans 462–619; the sequence is TTTFVAQDPA…GVLLDLSRTS (158 aa). 2 disulfide bridges follow: Cys-570–Cys-601 and Cys-589–Cys-603. The GPS stretch occupies residues 570–619; that stretch reads CVFWDLGRNGGRGGWSDNGCSVKDRRLNETICTCSHLTSFGVLLDLSRTS. The interval 608–619 is stachel; that stretch reads SFGVLLDLSRTS. The helical transmembrane segment at 628–648 threads the bilayer; the sequence is LTFITYIGCGLSSIFLSVTLV. Residues 649-667 are Cytoplasmic-facing; it reads TYIAFEKIRRDYPSKILIQ. The chain crosses the membrane as a helical span at residues 668–688; that stretch reads LCAALLLLNLVFLLDSWIALY. At 689 to 693 the chain is on the extracellular side; it reads KMQGL. Residues 694–714 traverse the membrane as a helical segment; the sequence is CISVAVFLHYFLLVSFTWMGL. A disulfide bridge links Cys-694 with Cys-778. Topologically, residues 715–737 are cytoplasmic; that stretch reads EAFHMYLALVKVFNTYIRKYILK. Residues 738–758 form a helical membrane-spanning segment; it reads FCIVGWGVPAVVVTIILTISP. At 759-789 the chain is on the extracellular side; sequence DNYGLGSYGKFPNGSPDDFCWINNNAVFYIT. A helical membrane pass occupies residues 790–810; sequence VVGYFCVIFLLNVSMFIVVLV. Residues 811–834 are Cytoplasmic-facing; that stretch reads QLCRIKKKKQLGAQRKTSIQDLRS. A helical transmembrane segment spans residues 835–855; it reads IAGLTFLLGITWGFAFFAWGP. At 856-857 the chain is on the extracellular side; that stretch reads VN. The N-linked (GlcNAc...) asparagine glycan is linked to Asn-857. A helical transmembrane segment spans residues 858–878; the sequence is VTFMYLFAIFNTLQGFFIFIF. Asn-868 is a 3beta-hydroxyandrost-5-en-17-one binding site. At 879–1017 the chain is on the cytoplasmic side; the sequence is YCVAKENVRK…RGSLHFIEQM (139 aa). Residues 918–939 form a disordered region; the sequence is QTVNQGVSSSSNSLQSSSNSTN. Ser-1010 carries the phosphoserine modification.

It belongs to the G-protein coupled receptor 2 family. Adhesion G-protein coupled receptor (ADGR) subfamily. Heterodimer of 2 chains generated by proteolytic processing; the large extracellular N-terminal fragment and the membrane-bound C-terminal fragment predominantly remain associated and non-covalently linked. Interacts with CFTR. In terms of processing, proteolytically cleaved into 2 subunits, an extracellular subunit and a seven-transmembrane subunit. Post-translationally, highly glycosylated. Epididymis-specific expression (at protein level). Both subunits are associated with apical membranes of efferent ductule and proximal epididymal duct epithelia. Mainly expressed in the nonciliated principal cells of the proximal excurrent ducts. Specifically over-expressed in Ewing sarcomas but also up-regulated in a number of carcinomas derived from prostate, kidney or lung.

Its subcellular location is the apical cell membrane. Its activity is regulated as follows. Forms a heterodimer of 2 chains generated by proteolytic processing that remain associated through non-covalent interactions mediated by the GAIN-B domain. In the inactivated receptor, the Stachel sequence (also named stalk) is embedded in the GAIN-B domain, where it adopts a beta-strand conformation. On activation, the Stachel moves into the 7 transmembrane region and adopts a twisted hook-shaped configuration that forms contacts within the receptor, leading to coupling of a G-alpha protein, which activates signaling. The cleaved GAIN-B and N-terminal domains can then dissociate from the rest of the receptor. Deoxycorticosterone (DOC) acts as an antagonist of ADGRG2. In terms of biological role, adhesion G-protein coupled receptor (aGPCR) for steroid hormones, such as dehydroepiandrosterone (DHEA; also named 3beta-hydroxyandrost-5-en-17-one) and androstenedione. Involved in a signal transduction pathway controlling epididymal function and male fertility. Ligand binding causes a conformation change that triggers signaling via guanine nucleotide-binding proteins (G proteins) and modulates the activity of downstream effectors, such as adenylate cyclase. ADGRG2 is coupled to G(s) G proteins and mediates activation of adenylate cyclase activity. Also able to couple with G(q) G proteins in vitro. Together with CFTR, required to promote fluid reabsorption within efferent ductule. The sequence is that of Adhesion G-protein coupled receptor G2 from Homo sapiens (Human).